The sequence spans 505 residues: Circadian clock protein KaiC3 (505 aa).

KaiC domains follow at residues 10–252 (EKLE…KSSD) and 253–485 (IRIT…LAGT). S423 carries the post-translational modification Phosphoserine; by autocatalysis. Phosphothreonine; by autocatalysis is present on T424.

The protein belongs to the KaiC family. Multimerizes, probably forming homohexamers, no interaction with KaiC1 or KaiC2 is seen. In another study forms hexamers, interacts with KaiB1, KaiB3, and KaiC1. Post-translationally, autophosphorylates and dephosphorylates. Dephosphorylation of KaiC3 was higher at 25 than at 30 or 35 degrees Celsius.

It carries out the reaction L-seryl-[protein] + ATP = O-phospho-L-seryl-[protein] + ADP + H(+). The enzyme catalyses L-threonyl-[protein] + ATP = O-phospho-L-threonyl-[protein] + ADP + H(+). It catalyses the reaction ATP + H2O = ADP + phosphate + H(+). ATPase activity is influenced by KaiB1 and KaiB3 in vitro; ATPase is reduced 35% by the KaiB1 tetramer and 55% by the KaiB3 monomer but not affected by KaiA or the KaiB3 tetramer. Functionally, seems to be linked to dark adaption of Synechocystis cells, but is not as essential as the core oscillator KaiAB1C1 for the circadian cycle. KaiB3 and KaiC3 may cross talk with the core oscillator. Autophosphorylates and dephosphorylates independently of KaiA. Has a weak ATPase, hydrolyzes 8.5 ATP/monomer/day, has no detectable ATP synthesis activity. ATPase activity reduced 55% by KaiB3 monomer but not the KaiB3 tetramer or KaiA in vitro, reduced 35% by KaiB1 tetramer. The protein is Circadian clock protein KaiC3 of Synechocystis sp. (strain ATCC 27184 / PCC 6803 / Kazusa).